Here is a 461-residue protein sequence, read N- to C-terminus: Ig heavy chain C region, membrane-bound form (461 aa).

Positions 1 to 99 (ATPSPPTLYG…GESVWIKEIP (99 aa)) are CH1. The tract at residues 100–205 (DCKGDKVHPT…TQSRNITGSQ (106 aa)) is CH2. Asn164, Asn200, Asn245, Asn275, Asn374, Asn411, Asn415, and Asn437 each carry an N-linked (GlcNAc...) asparagine glycan. Residues 206 to 308 (VPCSCNDPVI…PLRASIHKEE (103 aa)) form a CH3 region. The interval 309 to 418 (VKDLREPSVS…IINRTVNKSS (110 aa)) is CH4. The chain crosses the membrane as a helical span at residues 438 to 458 (ASTFIILFFLSIFYRAAVTLV).

It is found in the cell membrane. This chain is Ig heavy chain C region, membrane-bound form, found in Heterodontus francisci (Horn shark).